Consider the following 151-residue polypeptide: uncharacterized protein (151 aa).

4 helical membrane passes run Gly8–Glu28, Trp60–Thr80, Phe82–Ser102, and Leu113–Ser133.

It belongs to the DoxX family.

Its subcellular location is the cell membrane. This is an uncharacterized protein from Haemophilus influenzae (strain ATCC 51907 / DSM 11121 / KW20 / Rd).